The chain runs to 217 residues: RING-H2 finger protein ATL70 (217 aa).

The chain crosses the membrane as a helical span at residues 61 to 81 (IGGFRYGIGVSIGVLLLITTI). The RING-type; atypical zinc finger occupies 147 to 189 (CAICLGDYKGKHLLRQLPDCNHLFHLKCIDTWLRLNPTCPVCR).

This sequence belongs to the RING-type zinc finger family. ATL subfamily.

It is found in the membrane. It carries out the reaction S-ubiquitinyl-[E2 ubiquitin-conjugating enzyme]-L-cysteine + [acceptor protein]-L-lysine = [E2 ubiquitin-conjugating enzyme]-L-cysteine + N(6)-ubiquitinyl-[acceptor protein]-L-lysine.. The protein operates within protein modification; protein ubiquitination. This is RING-H2 finger protein ATL70 (ATL70) from Arabidopsis thaliana (Mouse-ear cress).